A 306-amino-acid polypeptide reads, in one-letter code: Acetyl-coenzyme A carboxylase carboxyl transferase subunit beta (306 aa).

In terms of domain architecture, CoA carboxyltransferase N-terminal spans 25–294; sequence VWTKCDSCGQ…PQDPLPHEPR (270 aa). Zn(2+) is bound by residues Cys29, Cys32, Cys48, and Cys51. Residues 29-51 form a C4-type zinc finger; the sequence is CDSCGQVLYRAELERNLEVCPKC. Residues 281 to 306 are disordered; the sequence is NRPQPQDPLPHEPRPDAVPEDHQDEV. A compositionally biased stretch (basic and acidic residues) spans 289-306; it reads LPHEPRPDAVPEDHQDEV.

This sequence belongs to the AccD/PCCB family. Acetyl-CoA carboxylase is a heterohexamer composed of biotin carboxyl carrier protein (AccB), biotin carboxylase (AccC) and two subunits each of ACCase subunit alpha (AccA) and ACCase subunit beta (AccD). Zn(2+) is required as a cofactor.

Its subcellular location is the cytoplasm. The enzyme catalyses N(6)-carboxybiotinyl-L-lysyl-[protein] + acetyl-CoA = N(6)-biotinyl-L-lysyl-[protein] + malonyl-CoA. The protein operates within lipid metabolism; malonyl-CoA biosynthesis; malonyl-CoA from acetyl-CoA: step 1/1. Its function is as follows. Component of the acetyl coenzyme A carboxylase (ACC) complex. Biotin carboxylase (BC) catalyzes the carboxylation of biotin on its carrier protein (BCCP) and then the CO(2) group is transferred by the transcarboxylase to acetyl-CoA to form malonyl-CoA. This is Acetyl-coenzyme A carboxylase carboxyl transferase subunit beta from Sodalis glossinidius (strain morsitans).